Reading from the N-terminus, the 677-residue chain is WD repeat-containing protein 48 (677 aa).

Tyr-28 carries the post-translational modification Phosphotyrosine. WD repeat units lie at residues 28–67 (YNRN…QDPY), 73–112 (HHTD…CMST), 115–154 (THKD…ALTA), 166–205 (GNKD…KLMK), 208–247 (GHTD…CIAT), 250–289 (VHDE…IRVL), 292–334 (EEKA…NFRA), and 358–397 (KGGA…KVED). An N6-acetyllysine modification is found at Lys-214. Lys-578 is modified (N6-acetyllysine). The tract at residues 607 to 628 (LDNESQTTSSSNNEKPGEQEKE) is disordered. A compositionally biased stretch (low complexity) spans 609–620 (NESQTTSSSNNE). The residue at position 613 (Thr-613) is a Phosphothreonine.

It belongs to the WD repeat WDR48 family. As to quaternary structure, interacts with USP46. Interacts with USP1. Interacts with USP12. Component of the USP12-WDR20-WDR48 deubiquitinating complex. Component of the USP12-DMWD-WDR48 deubiquitinating complex. Interacts with PHLPP1. Interacts with RAD51AP1; the interaction is direct and promotes formation of a trimeric complex with RAD51 via RAD51AP1. Interacts with ATAD5; the interaction regulates USP1-mediated PCNA deubiquitination. Interacts with RAD51; the interaction is enhanced under replication stress. Interacts with ITCH; the interaction is more efficient when both USP12 and WDR48/UAF1 are involved and may facilitate recruitment of the USP12 deubiquitinating complex to Notch. (Microbial infection) Interacts with papillomavirus HPV11 E1 protein. In terms of assembly, (Microbial infection) Interacts with Saimiriine herpesvirus TIP protein. As to quaternary structure, (Microbial infection) Interacts with human cytomegalovirus protein UL138. (Microbial infection) Interacts with Epstein-Barr virus protein EBNA3. Ubiquitous.

It is found in the nucleus. The protein localises to the cytoplasm. Its subcellular location is the lysosome. The protein resides in the late endosome. Functionally, regulator of deubiquitinating complexes, which acts as a strong activator of USP1, USP12 and USP46. Enhances the USP1-mediated deubiquitination of FANCD2; USP1 being almost inactive by itself. Activates deubiquitination by increasing the catalytic turnover without increasing the affinity of deubiquitinating enzymes for the substrate. Also activates deubiquitinating activity of complexes containing USP12. In complex with USP12, acts as a potential tumor suppressor by positively regulating PHLPP1 stability. Docks at the distal end of the USP12 fingers domain and induces a cascade of structural changes leading to the activation of the enzyme. Together with RAD51AP1, promotes DNA repair by stimulating RAD51-mediated homologous recombination. Binds single-stranded DNA (ssDNA) and double-stranded DNA (dsDNA). DNA-binding is required both for USP1-mediated deubiquitination of FANCD2 and stimulation of RAD51-mediated homologous recombination: both WDR48/UAF1 and RAD51AP1 have coordinated role in DNA-binding during these processes. Together with ATAD5 and by regulating USP1 activity, has a role in PCNA-mediated translesion synthesis (TLS) by deubiquitinating monoubiquitinated PCNA. Together with ATAD5, has a role in recruiting RAD51 to stalled forks during replication stress. Its function is as follows. (Microbial infection) In case of infection by Herpesvirus saimiri, may play a role in vesicular transport or membrane fusion events necessary for transport to lysosomes. Induces lysosomal vesicle formation via interaction with Herpesvirus saimiri tyrosine kinase-interacting protein (TIP). Subsequently, TIP recruits tyrosine-protein kinase LCK, resulting in down-regulation of T-cell antigen receptor TCR. May play a role in generation of enlarged endosomal vesicles via interaction with TIP. In case of infection by papillomavirus HPV11, promotes the maintenance of the viral genome via its interaction with HPV11 helicase E1. The sequence is that of WD repeat-containing protein 48 from Homo sapiens (Human).